A 360-amino-acid chain; its full sequence is Arginase, non-hepatic 3 (360 aa).

His122, Asp145, His147, and Asp149 together coordinate Mn(2+). Substrate contacts are provided by residues 147–151 (HADIN), 158–160 (SGN), and Asp204. Mn(2+) contacts are provided by Asp253 and Asp255. Residues Thr267 and Glu298 each coordinate substrate.

This sequence belongs to the arginase family. In terms of assembly, homotrimer. Mn(2+) serves as cofactor. As to expression, expressed at differing tadpole stages in tail, intestine, hindlimb and trunk region. Strongest in tadpole tail.

The enzyme catalyses L-arginine + H2O = urea + L-ornithine. It functions in the pathway nitrogen metabolism; urea cycle; L-ornithine and urea from L-arginine: step 1/1. In terms of biological role, as well as its role in the urea cycle, may be involved in tissue remodeling. The polypeptide is Arginase, non-hepatic 3 (arg2-c) (Xenopus laevis (African clawed frog)).